The primary structure comprises 1644 residues: Peroxisome proliferator-activated receptor gamma coactivator-related protein 1 (1644 aa).

7 disordered regions span residues 1–61 (MAAR…DSSF), 170–249 (PERD…EVAG), 429–616 (LTPK…TSPV), 646–761 (AADP…PETP), 773–884 (SAPA…QPPG), 978–1074 (STVS…EGVV), and 1322–1507 (AAPP…NDHY). Positions 12–22 (APPPTGGPGPD) are enriched in pro residues. Low complexity predominate over residues 213–222 (SSPKLPSWRP). Ser232 bears the Phosphoserine mark. The necessary for interaction with CREB1 and NRF1 and for transcriptional coactivation stretch occupies residues 425–460 (IMESLTPKEPQSLPASASQGSQKVPRKGRKKKNKEQ). Positions 437–446 (LPASASQGSQ) are enriched in polar residues. Positions 448 to 457 (VPRKGRKKKN) are enriched in basic residues. Residues 475 to 496 (SSRGQSTVSAEVNSQAGSSQKQ) show a composition bias toward polar residues. Positions 515 to 524 (RAWARAWAAA) are enriched in low complexity. A Phosphoserine modification is found at Ser541. A compositionally biased stretch (polar residues) spans 556 to 572 (ETSQANPTLSLNDSAQA). Residues 691 to 702 (DHPKVVSPEGKD) show a composition bias toward basic and acidic residues. Polar residues predominate over residues 811-821 (MVSTHSEQVSS). Composition is skewed to pro residues over residues 828-864 (VRPPPPPLPSVSPAGPIPSTVPAPLPPFPPSVPPLLP) and 874-884 (RLPPPPLQPPG). Residues Ser1059, Ser1393, and Ser1395 each carry the phosphoserine modification. Positions 1361 to 1432 (EASPCRSEMN…SSSSSVSSSS (72 aa)) are necessary for interaction with CREB1 and NRF1. 2 stretches are compositionally biased toward low complexity: residues 1409–1433 (SRSVSSGSSRTSEASSSSSVSSSSR) and 1453–1489 (SSCSSSGRSRRCSSSSSSSSSSSSCSSRSRSPSVSPC). Residues 1523–1599 (RVVFIGKIPG…QPFDLCFGGR (77 aa)) form the RRM domain.

In terms of assembly, interacts with CREB1 and NRF1. Expressed in liver, heart, skeletal muscle, kidney and white and brown adipose tissues.

It localises to the nucleus. Functionally, acts as a coactivator during transcriptional activation of nuclear genes related to mitochondrial biogenesis and cell growth. Involved in the transcription coactivation of CREB and NRF1 target genes. The polypeptide is Peroxisome proliferator-activated receptor gamma coactivator-related protein 1 (Pprc1) (Mus musculus (Mouse)).